The primary structure comprises 117 residues: Probable non-functional immunoglobulin kappa variable 1D-42 (117 aa).

A signal peptide spans 1-22; the sequence is MDMRVPAQLLGLLLLWLPGVRF. Residues 23–45 are framework-1; that stretch reads DIQMTQSPSFLSASVGDRVSIIC. The Ig-like domain occupies 23–117; that stretch reads DIQMTQSPSF…YYCKQDFSYP (95 aa). A disulfide bridge connects residues Cys45 and Cys110. Residues 46–56 form a complementarity-determining-1 region; it reads WASEGISSNLA. The interval 57–71 is framework-2; sequence WYLQKPGKSPKLFLY. The tract at residues 72–78 is complementarity-determining-2; the sequence is DAKDLHP. Residues 79–110 form a framework-3 region; the sequence is GVSSRFSGRGSGTDFTLTIISLKPEDFAAYYC. The segment at 111–117 is complementarity-determining-3; it reads KQDFSYP.

As to quaternary structure, immunoglobulins are composed of two identical heavy chains and two identical light chains; disulfide-linked.

Its subcellular location is the secreted. It localises to the cell membrane. Its function is as follows. Probable non-functional open reading frame (ORF) of V region of the variable domain of immunoglobulin light chains. Non-functional ORF generally cannot participate in the synthesis of a productive immunoglobulin chain due to altered V-(D)-J or switch recombination and/or splicing site (at mRNA level) and/or conserved amino acid change (protein level). Immunoglobulins, also known as antibodies, are membrane-bound or secreted glycoproteins produced by B lymphocytes. In the recognition phase of humoral immunity, the membrane-bound immunoglobulins serve as receptors which, upon binding of a specific antigen, trigger the clonal expansion and differentiation of B lymphocytes into immunoglobulins-secreting plasma cells. Secreted immunoglobulins mediate the effector phase of humoral immunity, which results in the elimination of bound antigens. The antigen binding site is formed by the variable domain of one heavy chain, together with that of its associated light chain. Thus, each immunoglobulin has two antigen binding sites with remarkable affinity for a particular antigen. The variable domains are assembled by a process called V-(D)-J rearrangement and can then be subjected to somatic hypermutations which, after exposure to antigen and selection, allow affinity maturation for a particular antigen. The sequence is that of Probable non-functional immunoglobulin kappa variable 1D-42 from Homo sapiens (Human).